We begin with the raw amino-acid sequence, 276 residues long: ARL14 effector protein (276 aa).

The tract at residues 158 to 177 (KQTEFAPEGGKREKRKLTKA) is disordered. K176 is covalently cross-linked (Glycyl lysine isopeptide (Lys-Gly) (interchain with G-Cter in SUMO2)). Phosphoserine is present on residues S182 and S266.

In terms of assembly, interacts with ARL14 and MYO1E.

The protein localises to the cytoplasm. Functionally, through its interaction with ARL14 and MYO1E, may connect MHC class II-containing cytoplasmic vesicles to the actin network and hence controls the movement of these vesicles along the actin cytoskeleton in dendritic cells. This is ARL14 effector protein (Arl14ep) from Mus musculus (Mouse).